A 157-amino-acid chain; its full sequence is Endoribonuclease YbeY (157 aa).

Residues H111, H115, and H121 each contribute to the Zn(2+) site.

This sequence belongs to the endoribonuclease YbeY family. Zn(2+) is required as a cofactor.

Its subcellular location is the cytoplasm. Functionally, single strand-specific metallo-endoribonuclease involved in late-stage 70S ribosome quality control and in maturation of the 3' terminus of the 16S rRNA. This Pseudomonas putida (strain W619) protein is Endoribonuclease YbeY.